Consider the following 880-residue polypeptide: Probable receptor-like protein kinase At5g38990 (880 aa).

The first 21 residues, 1-21, serve as a signal peptide directing secretion; it reads MICHVLVIFTILVSAVVDATA. The Extracellular portion of the chain corresponds to 22–440; it reads SYEPTDVFLI…GKGKSSHVLP (419 aa). Residues Asn46, Asn136, Asn158, Asn210, Asn256, Asn263, Asn297, and Asn324 are each glycosylated (N-linked (GlcNAc...) asparagine). A helical membrane pass occupies residues 441 to 461; that stretch reads IIIAVVGSAVALAFFVLVVVL. Residues 462-880 are Cytoplasmic-facing; that stretch reads VVMKRKKKSN…FSEINEPKAR (419 aa). The segment at 471–505 is disordered; the sequence is NESSVDTTNKPSTNSSWGPLLHGTGSTNTKSASSL. Composition is skewed to polar residues over residues 472-487 and 494-505; these read ESSV…NSSW and TGSTNTKSASSL. In terms of domain architecture, Protein kinase spans 525-810; sequence FEEKLIIGVG…EFALQLHETA (286 aa). ATP is bound by residues 531-539 and Lys554; that span reads IGVGGFGSV. Asp653 acts as the Proton acceptor in catalysis. Residues 820–846 are disordered; that stretch reads LDLMPSGEVGTTTDGEDDLFSRTTGHV.

Belongs to the protein kinase superfamily. Ser/Thr protein kinase family.

The protein resides in the membrane. The sequence is that of Probable receptor-like protein kinase At5g38990 from Arabidopsis thaliana (Mouse-ear cress).